The primary structure comprises 422 residues: Serine hydroxymethyltransferase 2 (422 aa).

(6S)-5,6,7,8-tetrahydrofolate is bound by residues leucine 121 and 125 to 127 (GHL). Lysine 230 carries the post-translational modification N6-(pyridoxal phosphate)lysine.

Belongs to the SHMT family. In terms of assembly, homodimer. Requires pyridoxal 5'-phosphate as cofactor.

Its subcellular location is the cytoplasm. The enzyme catalyses (6R)-5,10-methylene-5,6,7,8-tetrahydrofolate + glycine + H2O = (6S)-5,6,7,8-tetrahydrofolate + L-serine. Its pathway is one-carbon metabolism; tetrahydrofolate interconversion. It functions in the pathway amino-acid biosynthesis; glycine biosynthesis; glycine from L-serine: step 1/1. In terms of biological role, catalyzes the reversible interconversion of serine and glycine with tetrahydrofolate (THF) serving as the one-carbon carrier. This reaction serves as the major source of one-carbon groups required for the biosynthesis of purines, thymidylate, methionine, and other important biomolecules. Also exhibits THF-independent aldolase activity toward beta-hydroxyamino acids, producing glycine and aldehydes, via a retro-aldol mechanism. The chain is Serine hydroxymethyltransferase 2 from Agrobacterium fabrum (strain C58 / ATCC 33970) (Agrobacterium tumefaciens (strain C58)).